A 355-amino-acid polypeptide reads, in one-letter code: UDP-3-O-acylglucosamine N-acyltransferase (355 aa).

His248 (proton acceptor) is an active-site residue.

This sequence belongs to the transferase hexapeptide repeat family. LpxD subfamily. In terms of assembly, homotrimer.

It catalyses the reaction a UDP-3-O-[(3R)-3-hydroxyacyl]-alpha-D-glucosamine + a (3R)-hydroxyacyl-[ACP] = a UDP-2-N,3-O-bis[(3R)-3-hydroxyacyl]-alpha-D-glucosamine + holo-[ACP] + H(+). The protein operates within bacterial outer membrane biogenesis; LPS lipid A biosynthesis. Its function is as follows. Catalyzes the N-acylation of UDP-3-O-acylglucosamine using 3-hydroxyacyl-ACP as the acyl donor. Is involved in the biosynthesis of lipid A, a phosphorylated glycolipid that anchors the lipopolysaccharide to the outer membrane of the cell. The chain is UDP-3-O-acylglucosamine N-acyltransferase from Syntrophobacter fumaroxidans (strain DSM 10017 / MPOB).